The chain runs to 117 residues: Ribosome-binding factor A (117 aa).

Belongs to the RbfA family. In terms of assembly, monomer. Binds 30S ribosomal subunits, but not 50S ribosomal subunits or 70S ribosomes.

The protein localises to the cytoplasm. One of several proteins that assist in the late maturation steps of the functional core of the 30S ribosomal subunit. Associates with free 30S ribosomal subunits (but not with 30S subunits that are part of 70S ribosomes or polysomes). Required for efficient processing of 16S rRNA. May interact with the 5'-terminal helix region of 16S rRNA. This is Ribosome-binding factor A from Anaplasma marginale (strain St. Maries).